The sequence spans 143 residues: Period circadian protein (143 aa).

The segment at 25 to 130 (NSKPVTAPTQ…GPSLAADNSI (106 aa)) is disordered. 2 stretches are compositionally biased toward low complexity: residues 71-93 (SGNC…ITGT) and 114-126 (GGAA…SLAA).

As to quaternary structure, forms a heterodimer with timeless (TIM); the complex then translocates into the nucleus. Phosphorylated with a circadian rhythmicity, probably by the double-time protein (dbt). Phosphorylation could be implicated in the stability of per monomer and in the formation of heterodimer per-tim.

The protein resides in the nucleus. Its subcellular location is the cytoplasm. It localises to the perinuclear region. In terms of biological role, essential for biological clock functions. Determines the period length of circadian and ultradian rhythms; an increase in PER dosage leads to shortened circadian rhythms and a decrease leads to lengthened circadian rhythms. Essential for the circadian rhythmicity of locomotor activity, eclosion behavior, and for the rhythmic component of the male courtship song that originates in the thoracic nervous system. The biological cycle depends on the rhythmic formation and nuclear localization of the TIM-PER complex. Light induces the degradation of TIM, which promotes elimination of PER. Nuclear activity of the heterodimer coordinatively regulates PER and TIM transcription through a negative feedback loop. Behaves as a negative element in circadian transcriptional loop. Does not appear to bind DNA, suggesting indirect transcriptional inhibition. In Drosophila picticornis (Fruit fly), this protein is Period circadian protein (per).